The sequence spans 142 residues: Large ribosomal subunit protein uL11 (142 aa).

This sequence belongs to the universal ribosomal protein uL11 family. In terms of assembly, part of the ribosomal stalk of the 50S ribosomal subunit. Interacts with L10 and the large rRNA to form the base of the stalk. L10 forms an elongated spine to which L12 dimers bind in a sequential fashion forming a multimeric L10(L12)X complex. Post-translationally, one or more lysine residues are methylated.

Its function is as follows. Forms part of the ribosomal stalk which helps the ribosome interact with GTP-bound translation factors. The chain is Large ribosomal subunit protein uL11 from Bartonella bacilliformis (strain ATCC 35685 / KC583 / Herrer 020/F12,63).